A 177-amino-acid chain; its full sequence is Endoribonuclease YbeY (177 aa).

3 residues coordinate Zn(2+): His118, His122, and His128.

It belongs to the endoribonuclease YbeY family. Zn(2+) is required as a cofactor.

The protein resides in the cytoplasm. In terms of biological role, single strand-specific metallo-endoribonuclease involved in late-stage 70S ribosome quality control and in maturation of the 3' terminus of the 16S rRNA. This chain is Endoribonuclease YbeY, found in Mycobacterium sp. (strain JLS).